The chain runs to 61 residues: Small ribosomal subunit protein uS14B (61 aa).

The Zn(2+) site is built by Cys-24, Cys-27, Cys-40, and Cys-43.

It belongs to the universal ribosomal protein uS14 family. Zinc-binding uS14 subfamily. As to quaternary structure, part of the 30S ribosomal subunit. Contacts proteins S3 and S10. It depends on Zn(2+) as a cofactor.

In terms of biological role, binds 16S rRNA, required for the assembly of 30S particles and may also be responsible for determining the conformation of the 16S rRNA at the A site. The chain is Small ribosomal subunit protein uS14B from Limosilactobacillus reuteri (strain DSM 20016) (Lactobacillus reuteri).